A 101-amino-acid chain; its full sequence is Small ribosomal subunit protein uS14 (101 aa).

Belongs to the universal ribosomal protein uS14 family. In terms of assembly, part of the 30S ribosomal subunit. Contacts proteins S3 and S10.

Functionally, binds 16S rRNA, required for the assembly of 30S particles and may also be responsible for determining the conformation of the 16S rRNA at the A site. The sequence is that of Small ribosomal subunit protein uS14 from Cupriavidus pinatubonensis (strain JMP 134 / LMG 1197) (Cupriavidus necator (strain JMP 134)).